The sequence spans 1309 residues: DNA repair protein RAD9 (1309 aa).

Positions 1-19 (MSGQLVQWKSSPDRVTQSA) are enriched in polar residues. The interval 1 to 39 (MSGQLVQWKSSPDRVTQSAIKEALHSPLADGDMNEMNVP) is disordered. Residues S26, S56, and S205 each carry the phosphoserine modification. Residue T218 is modified to Phosphothreonine. A Phosphoserine modification is found at S248. A disordered region spans residues 280–299 (NIGAIEEKNPVKKKSENYSS). Over residues 284-299 (IEEKNPVKKKSENYSS) the composition is skewed to basic and acidic residues. Phosphoserine is present on residues S312 and S315. The interval 342–365 (NSAVSGTPSRNNAEEEMYSSESVN) is disordered. A compositionally biased stretch (polar residues) spans 343-352 (SAVSGTPSRN). A Phosphoserine modification is found at S462. Phosphothreonine occurs at positions 471 and 474. The interval 490-512 (PETSSPSKNTMSKPSNSSPIPKE) is disordered. Polar residues predominate over residues 491-508 (ETSSPSKNTMSKPSNSSP). S568 is modified (phosphoserine). Disordered stretches follow at residues 636–655 (KGNS…DKQD) and 691–731 (IIQN…NSDL). Positions 642 to 655 (LHDDNKECNSDKQD) are enriched in basic and acidic residues. S729 carries the phosphoserine modification. The region spanning 994-1122 (RTGNVFDKCI…RIVPHLIYQY (129 aa)) is the BRCT domain.

As to quaternary structure, physically associates with RAD53.

The protein localises to the nucleus. Functionally, essential for cell cycle arrest at the G2 stage following DNA damage by X-irradiation or inactivation of DNA ligase. The polypeptide is DNA repair protein RAD9 (RAD9) (Saccharomyces cerevisiae (strain ATCC 204508 / S288c) (Baker's yeast)).